A 206-amino-acid chain; its full sequence is Holliday junction branch migration complex subunit RuvA (206 aa).

Residues 1-64 (MIGRLTGNLV…ETSQQLFGFI (64 aa)) form a domain I region. Positions 65–142 (DQQDREFFRM…SWQVTPSVDA (78 aa)) are domain II. The segment at 143 to 154 (TGSLVALDSAAP) is flexible linker. The domain III stretch occupies residues 155 to 206 (SQNAIVAEAESALVALGYKPVEASKAVARVTSDEITRSEDLIRLALRNMIPA).

This sequence belongs to the RuvA family. In terms of assembly, homotetramer. Forms an RuvA(8)-RuvB(12)-Holliday junction (HJ) complex. HJ DNA is sandwiched between 2 RuvA tetramers; dsDNA enters through RuvA and exits via RuvB. An RuvB hexamer assembles on each DNA strand where it exits the tetramer. Each RuvB hexamer is contacted by two RuvA subunits (via domain III) on 2 adjacent RuvB subunits; this complex drives branch migration. In the full resolvosome a probable DNA-RuvA(4)-RuvB(12)-RuvC(2) complex forms which resolves the HJ.

Its subcellular location is the cytoplasm. In terms of biological role, the RuvA-RuvB-RuvC complex processes Holliday junction (HJ) DNA during genetic recombination and DNA repair, while the RuvA-RuvB complex plays an important role in the rescue of blocked DNA replication forks via replication fork reversal (RFR). RuvA specifically binds to HJ cruciform DNA, conferring on it an open structure. The RuvB hexamer acts as an ATP-dependent pump, pulling dsDNA into and through the RuvAB complex. HJ branch migration allows RuvC to scan DNA until it finds its consensus sequence, where it cleaves and resolves the cruciform DNA. This chain is Holliday junction branch migration complex subunit RuvA, found in Teredinibacter turnerae (strain ATCC 39867 / T7901).